The chain runs to 296 residues: Nucleotide-binding protein spr1424 (296 aa).

Gly13–Thr20 contributes to the ATP binding site. Asp63–Ser66 provides a ligand contact to GTP.

It belongs to the RapZ-like family.

In terms of biological role, displays ATPase and GTPase activities. The chain is Nucleotide-binding protein spr1424 from Streptococcus pneumoniae (strain ATCC BAA-255 / R6).